The sequence spans 208 residues: V-type ATP synthase subunit D (208 aa).

This sequence belongs to the V-ATPase D subunit family.

Functionally, produces ATP from ADP in the presence of a proton gradient across the membrane. The chain is V-type ATP synthase subunit D from Streptococcus pyogenes serotype M6 (strain ATCC BAA-946 / MGAS10394).